Reading from the N-terminus, the 432-residue chain is Enolase (432 aa).

Residue Gln167 participates in (2R)-2-phosphoglycerate binding. Glu209 functions as the Proton donor in the catalytic mechanism. The Mg(2+) site is built by Asp246, Glu290, and Asp317. Lys342, Arg371, Ser372, and Lys393 together coordinate (2R)-2-phosphoglycerate. Lys342 (proton acceptor) is an active-site residue.

The protein belongs to the enolase family. In terms of assembly, component of the RNA degradosome, a multiprotein complex involved in RNA processing and mRNA degradation. It depends on Mg(2+) as a cofactor.

The protein localises to the cytoplasm. The protein resides in the secreted. Its subcellular location is the cell surface. It catalyses the reaction (2R)-2-phosphoglycerate = phosphoenolpyruvate + H2O. It participates in carbohydrate degradation; glycolysis; pyruvate from D-glyceraldehyde 3-phosphate: step 4/5. In terms of biological role, catalyzes the reversible conversion of 2-phosphoglycerate (2-PG) into phosphoenolpyruvate (PEP). It is essential for the degradation of carbohydrates via glycolysis. The protein is Enolase of Salmonella dublin (strain CT_02021853).